The primary structure comprises 256 residues: Major prion protein (256 aa).

The N-terminal stretch at 1 to 24 (MVKSHIGSWILVLFVAMWSDVGLC) is a signal peptide. Positions 25–233 (KKRPKPGGGW…ESQAYYQRGA (209 aa)) are interaction with GRB2, ERI3 and SYN1. The disordered stretch occupies residues 28 to 110 (PKPGGGWNTG…QWNKPSKPKT (83 aa)). A run of 5 repeats spans residues 54 to 62 (PQGGGGWGQ), 63 to 70 (PHGGGWGQ), 71 to 78 (PHGGGWGQ), 79 to 86 (PHGGGWGQ), and 87 to 95 (PHGGGGWGQ). The interval 54 to 95 (PQGGGGWGQPHGGGWGQPHGGGWGQPHGGGWGQPHGGGGWGQ) is 5 X 8 AA tandem repeats of P-H-G-G-G-W-G-Q. Residues 55-97 (QGGGGWGQPHGGGWGQPHGGGWGQPHGGGWGQPHGGGGWGQGG) show a composition bias toward gly residues. Cu(2+) contacts are provided by His-64, Gly-65, Gly-66, His-72, Gly-73, Gly-74, His-80, Gly-81, Gly-82, His-88, Gly-90, and Gly-91. An intrachain disulfide couples Cys-182 to Cys-217. 2 N-linked (GlcNAc...) asparagine glycosylation sites follow: Asn-184 and Asn-200. Ala-233 carries GPI-anchor amidated alanine lipidation. Positions 234-256 (SVILFSSPPVILLISFLIFLIVG) are cleaved as a propeptide — removed in mature form.

It belongs to the prion family. In terms of assembly, monomer and homodimer. Has a tendency to aggregate into amyloid fibrils containing a cross-beta spine, formed by a steric zipper of superposed beta-strands. Soluble oligomers may represent an intermediate stage on the path to fibril formation. Copper binding may promote oligomerization. Interacts with GRB2, APP, ERI3/PRNPIP and SYN1. Mislocalized cytosolically exposed PrP interacts with MGRN1; this interaction alters MGRN1 subcellular location and causes lysosomal enlargement. Interacts with KIAA1191.

It localises to the cell membrane. The protein resides in the golgi apparatus. Functionally, its primary physiological function is unclear. Has cytoprotective activity against internal or environmental stresses. May play a role in neuronal development and synaptic plasticity. May be required for neuronal myelin sheath maintenance. May play a role in iron uptake and iron homeostasis. Soluble oligomers are toxic to cultured neuroblastoma cells and induce apoptosis (in vitro). Association with GPC1 (via its heparan sulfate chains) targets PRNP to lipid rafts. Also provides Cu(2+) or Zn(2+) for the ascorbate-mediated GPC1 deaminase degradation of its heparan sulfate side chains. The polypeptide is Major prion protein (PRNP) (Ovis canadensis (Bighorn sheep)).